The sequence spans 99 residues: UPF0235 protein Sbal223_1335 (99 aa).

The protein belongs to the UPF0235 family.

This is UPF0235 protein Sbal223_1335 from Shewanella baltica (strain OS223).